A 1154-amino-acid chain; its full sequence is ATP-dependent helicase/deoxyribonuclease subunit B (1154 aa).

Residues 1–284 (MSVRFIIGRS…EQLRHNVRHK (284 aa)) enclose the UvrD-like helicase ATP-binding domain. 8–15 (GRSGSGKT) contributes to the ATP binding site. Residues 279–583 (HNVRHKHEEL…QFSLVPPATD (305 aa)) form the UvrD-like helicase C-terminal domain. Residues cysteine 799, cysteine 1120, cysteine 1123, and cysteine 1129 each coordinate [4Fe-4S] cluster.

Belongs to the helicase family. AddB/RexB type 1 subfamily. In terms of assembly, heterodimer of AddA and AddB. Mg(2+) is required as a cofactor. [4Fe-4S] cluster serves as cofactor.

Its function is as follows. The heterodimer acts as both an ATP-dependent DNA helicase and an ATP-dependent, dual-direction single-stranded exonuclease. Recognizes the chi site generating a DNA molecule suitable for the initiation of homologous recombination. The AddB subunit has 5' -&gt; 3' nuclease activity but not helicase activity. The chain is ATP-dependent helicase/deoxyribonuclease subunit B from Anoxybacillus flavithermus (strain DSM 21510 / WK1).